Consider the following 460-residue polypeptide: Carboxypeptidase DacB (460 aa).

An N-terminal signal peptide occupies residues 1-28; the sequence is MRPTRWRRSTHVAVGVAVLALVVAVVAA. A disordered region spans residues 39-64; sequence AAEAVPPAPPPATADPGVVPVDLSAP. Ser-113 functions as the Acyl-ester intermediate in the catalytic mechanism. Lys-116 functions as the Proton acceptor in the catalytic mechanism. The active site involves Ser-294.

This sequence belongs to the peptidase S13 family.

Functionally, carboxypeptidase that cleaves terminal D-alanine from peptidoglycan in the mycobacterial cell wall. May cleave L-Lys-D-Ala and/or D-Ala-D-Ala peptide bonds. Exerts important effects on mycobacterial cell morphology and cell division. The polypeptide is Carboxypeptidase DacB (Mycolicibacterium smegmatis (strain ATCC 700084 / mc(2)155) (Mycobacterium smegmatis)).